Consider the following 323-residue polypeptide: tRNA dimethylallyltransferase (323 aa).

27–34 serves as a coordination point for ATP; sequence GPTGSGKT. 29–34 lines the substrate pocket; it reads TGSGKT. Interaction with substrate tRNA regions lie at residues 52–55 and 176–180; these read DSRQ and QRIVR.

This sequence belongs to the IPP transferase family. In terms of assembly, monomer. Mg(2+) is required as a cofactor.

It carries out the reaction adenosine(37) in tRNA + dimethylallyl diphosphate = N(6)-dimethylallyladenosine(37) in tRNA + diphosphate. Functionally, catalyzes the transfer of a dimethylallyl group onto the adenine at position 37 in tRNAs that read codons beginning with uridine, leading to the formation of N6-(dimethylallyl)adenosine (i(6)A). The sequence is that of tRNA dimethylallyltransferase from Desulfovibrio desulfuricans (strain ATCC 27774 / DSM 6949 / MB).